The primary structure comprises 270 residues: Tetraspanin-14 (270 aa).

The Cytoplasmic portion of the chain corresponds to 1–17 (MHYYRYSNAKVSCWYKY). Residues 18 to 38 (LLFSYNIIFWLAGVVFLGVGL) traverse the membrane as a helical segment. Residues 39-61 (WAWSEKGVLSDLTKVTRMHGIDP) lie on the Extracellular side of the membrane. The helical transmembrane segment at 62 to 82 (VVLVLMVGVVMFTLGFAGCVG) threads the bilayer. At 83–92 (ALRENICLLN) the chain is on the cytoplasmic side. Residues 93–113 (FFCGTIVLIFFLELAVAVLAF) traverse the membrane as a helical segment. Topologically, residues 114–232 (LFQDWVRDRF…QALESWLPRN (119 aa)) are extracellular. A necessary and sufficient for interaction with ADAM10 region spans residues 114 to 232 (LFQDWVRDRF…QALESWLPRN (119 aa)). 4 disulfide bridges follow: Cys-153-Cys-221, Cys-154-Cys-186, Cys-170-Cys-180, and Cys-187-Cys-200. The N-linked (GlcNAc...) asparagine glycan is linked to Asn-169. Residues 233–253 (IYIVAGVFIAISLLQIFGIFL) form a helical membrane-spanning segment. The Cytoplasmic portion of the chain corresponds to 254-270 (ARTLISDIEAVKAGHHF).

It belongs to the tetraspanin (TM4SF) family. As to quaternary structure, interacts with ADAM10; the interaction promotes ADAM10 maturation and cell surface expression.

It localises to the cell membrane. Its function is as follows. Part of TspanC8 subgroup, composed of 6 members that interact with the transmembrane metalloprotease ADAM10. This interaction is required for ADAM10 exit from the endoplasmic reticulum and for enzymatic maturation and trafficking to the cell surface as well as substrate specificity. Different TspanC8/ADAM10 complexes have distinct substrates. Negatively regulates ADAM10-mediated cleavage of GP6. Promotes ADAM10-mediated cleavage of CDH5. This Homo sapiens (Human) protein is Tetraspanin-14.